The chain runs to 251 residues: Hydroxyacylglutathione hydrolase (251 aa).

Positions 53, 55, 57, 58, 110, 127, and 165 each coordinate Zn(2+).

It belongs to the metallo-beta-lactamase superfamily. Glyoxalase II family. In terms of assembly, monomer. Requires Zn(2+) as cofactor.

It carries out the reaction an S-(2-hydroxyacyl)glutathione + H2O = a 2-hydroxy carboxylate + glutathione + H(+). The protein operates within secondary metabolite metabolism; methylglyoxal degradation; (R)-lactate from methylglyoxal: step 2/2. Functionally, thiolesterase that catalyzes the hydrolysis of S-D-lactoyl-glutathione to form glutathione and D-lactic acid. In Klebsiella pneumoniae subsp. pneumoniae (strain ATCC 700721 / MGH 78578), this protein is Hydroxyacylglutathione hydrolase.